Reading from the N-terminus, the 256-residue chain is Thiazole synthase (256 aa).

Catalysis depends on lysine 95, which acts as the Schiff-base intermediate with DXP. 1-deoxy-D-xylulose 5-phosphate-binding positions include glycine 156, 182–183, and 204–205; these read AG and NT.

It belongs to the ThiG family. Homotetramer. Forms heterodimers with either ThiH or ThiS.

Its subcellular location is the cytoplasm. It catalyses the reaction [ThiS sulfur-carrier protein]-C-terminal-Gly-aminoethanethioate + 2-iminoacetate + 1-deoxy-D-xylulose 5-phosphate = [ThiS sulfur-carrier protein]-C-terminal Gly-Gly + 2-[(2R,5Z)-2-carboxy-4-methylthiazol-5(2H)-ylidene]ethyl phosphate + 2 H2O + H(+). The protein operates within cofactor biosynthesis; thiamine diphosphate biosynthesis. In terms of biological role, catalyzes the rearrangement of 1-deoxy-D-xylulose 5-phosphate (DXP) to produce the thiazole phosphate moiety of thiamine. Sulfur is provided by the thiocarboxylate moiety of the carrier protein ThiS. In vitro, sulfur can be provided by H(2)S. The polypeptide is Thiazole synthase (Photobacterium profundum (strain SS9)).